We begin with the raw amino-acid sequence, 918 residues long: Melanoma-associated antigen E1 (918 aa).

Disordered stretches follow at residues 1-140 (MSLV…GSKA), 154-227 (EQRH…SNGL), and 367-388 (SQMSLAAEGPSASGMPTEANNP). Residues 8–23 (SRRRRGGRANARRNNG) are compositionally biased toward basic residues. 3 stretches are compositionally biased toward polar residues: residues 70-96 (VPPTASEGSSAPRQFIISQGPNTSEMP), 113-126 (GLNTAMSITASEGP), and 213-227 (EDPSTSVPPTDSNGL). MAGE domains follow at residues 459–658 (MEQN…YNEA) and 706–897 (LESK…YREA). An interaction with DTNA region spans residues 704–918 (SRLESKARKL…RRPLIVRNLR (215 aa)).

As to quaternary structure, interacts with DTNA. Interacts with TRIM28. As to expression, expressed in cell bodies and dendrites of hippocampal and Purkinje neurons. Also expressed in peripheral nerve, where it localizes to the perineurium and myelin (at protein level). Predominantly expressed in brain and at low levels in the heart, liver, kidney, spleen, testis, lung, thymus, placenta and skeletal muscle.

The protein resides in the cytoplasm. Its subcellular location is the perinuclear region. The protein localises to the nucleus. It is found in the cell membrane. In terms of biological role, may enhance ubiquitin ligase activity of RING-type zinc finger-containing E3 ubiquitin-protein ligases. Proposed to act through recruitment and/or stabilization of the Ubl-conjugating enzyme (E2) at the E3:substrate complex. This is Melanoma-associated antigen E1 (Magee1) from Mus musculus (Mouse).